The primary structure comprises 202 residues: MARYTGPMTKKSRRLGVDLVGGDSAYERRPYPPGQHGRGRIKESEYLLQLREKQKARFTYGVLEKQFHNYYTEASRRAGKTGDNLLQLLECRLDNVVYRAGFARTRRHARQLVTHGHFKVNGKKVDIPSFQVTAHDVIDVREKSLEMTPFIVARETHGERVVPAWLEAIPSRMRVLVHQLPVRAQIDIPVQEQLIVEYYSKK.

Residues 91 to 157 (CRLDNVVYRA…TPFIVARETH (67 aa)) enclose the S4 RNA-binding domain.

Belongs to the universal ribosomal protein uS4 family. As to quaternary structure, part of the 30S ribosomal subunit. Contacts protein S5. The interaction surface between S4 and S5 is involved in control of translational fidelity.

Its function is as follows. One of the primary rRNA binding proteins, it binds directly to 16S rRNA where it nucleates assembly of the body of the 30S subunit. With S5 and S12 plays an important role in translational accuracy. This is Small ribosomal subunit protein uS4 from Nocardioides sp. (strain ATCC BAA-499 / JS614).